The sequence spans 68 residues: Large ribosomal subunit protein bL35 (68 aa).

This sequence belongs to the bacterial ribosomal protein bL35 family.

This is Large ribosomal subunit protein bL35 from Rickettsia typhi (strain ATCC VR-144 / Wilmington).